We begin with the raw amino-acid sequence, 660 residues long: ATP-dependent zinc metalloprotease FtsH (660 aa).

A disordered region spans residues 1–20; that stretch reads MMPSSQRPSPRGSRQSPSPD. Topologically, residues 1-24 are cytoplasmic; the sequence is MMPSSQRPSPRGSRQSPSPDQRGR. A helical membrane pass occupies residues 25–45; the sequence is IAFAILATLVVAVLLLTLFSH. Topologically, residues 46-118 are extracellular; that stretch reads APSGQPLGYS…VQVSYITPGP (73 aa). The helical transmembrane segment at 119–139 threads the bilayer; that stretch reads GIASTIIEYVIFFGIFIGIWV. At 140 to 660 the chain is on the cytoplasmic side; that stretch reads YLTRRTQGSV…ASHDDTDPVS (521 aa). 213 to 220 is an ATP binding site; it reads GPPGTGKT. Zn(2+) is bound at residue H435. E436 is a catalytic residue. 2 residues coordinate Zn(2+): H439 and D511.

In the central section; belongs to the AAA ATPase family. The protein in the C-terminal section; belongs to the peptidase M41 family. As to quaternary structure, homohexamer. Zn(2+) is required as a cofactor.

It is found in the cell membrane. Acts as a processive, ATP-dependent zinc metallopeptidase for both cytoplasmic and membrane proteins. Plays a role in the quality control of integral membrane proteins. The chain is ATP-dependent zinc metalloprotease FtsH from Acidimicrobium ferrooxidans (strain DSM 10331 / JCM 15462 / NBRC 103882 / ICP).